The following is a 639-amino-acid chain: MTSKPNTPLLDQVVFPSDLRKIEDKDMPQVARELRDEMIDAVSVTGGHLGAGLGVVELTLAIHKVFNTPEDRLIFDVGHQCYPHKILTGRRERIRTLRQEHGLSGFTKRAESEYDPFGAAHSSTSISAGLGMAVAAELGQTDRKVIAVIGDGAMSAGMAFEALNNAGALDARLIVILNDNDMSIAPPTGAMSAYLARLASGRTYMGMREIGKKLTAYLGKNIDRAITRAVEHARGYVTGGTMFEEMGFYHIGPIDGHSFDHLLPVLRNVRDNAKGPVLIHVVTQKGKGYAPAEAAADKYHGVNTFDVITGTQAKAKPNAPSYTAVFADALVEEARLDDKIVGITAAMPSGTGLDKLQNLFPERTFDVGIAEQHAVTFAAGLAAEGYKPFCALYSTFLQRGYDQVVHDVAIQGLPVRFPIDRAGFVGADGPTHAGSFDTGFLASLPGFVVMAAADEAELKHMVRTAAAYDEGPISFRYPRGEGVGVQMPERGEILPIGKGRIIKEGSKVALLSFGTRLAECLVAAEDLDAAGLPTTVADARFAKPLDLDLIRQLARHHAVLITVEEGAVGGFGSQVLHMLANEGLLDHGLKVRSLVLPDLWMDQAKPDVMYEKAGLDAKGIVSTVFTALSRDALAQDSLA.

Residues His-79 and 120-122 each bind thiamine diphosphate; that span reads AHS. A Mg(2+)-binding site is contributed by Asp-151. Thiamine diphosphate-binding positions include 152 to 153, Asn-180, Tyr-289, and Glu-371; that span reads GA. Asn-180 contributes to the Mg(2+) binding site.

It belongs to the transketolase family. DXPS subfamily. In terms of assembly, homodimer. The cofactor is Mg(2+). Thiamine diphosphate is required as a cofactor.

The catalysed reaction is D-glyceraldehyde 3-phosphate + pyruvate + H(+) = 1-deoxy-D-xylulose 5-phosphate + CO2. The protein operates within metabolic intermediate biosynthesis; 1-deoxy-D-xylulose 5-phosphate biosynthesis; 1-deoxy-D-xylulose 5-phosphate from D-glyceraldehyde 3-phosphate and pyruvate: step 1/1. Its function is as follows. Catalyzes the acyloin condensation reaction between C atoms 2 and 3 of pyruvate and glyceraldehyde 3-phosphate to yield 1-deoxy-D-xylulose-5-phosphate (DXP). The chain is 1-deoxy-D-xylulose-5-phosphate synthase from Allorhizobium ampelinum (strain ATCC BAA-846 / DSM 112012 / S4) (Agrobacterium vitis (strain S4)).